A 932-amino-acid polypeptide reads, in one-letter code: Isoleucine--tRNA ligase (932 aa).

Residues 57–67 (PYANGNIHLGH) carry the 'HIGH' region motif. L-isoleucyl-5'-AMP is bound at residue glutamate 552. The 'KMSKS' region signature appears at 593–597 (KMSKS). Lysine 596 provides a ligand contact to ATP. Zn(2+)-binding residues include cysteine 889, cysteine 892, cysteine 911, and cysteine 914.

It belongs to the class-I aminoacyl-tRNA synthetase family. IleS type 1 subfamily. Monomer. Requires Zn(2+) as cofactor.

It localises to the cytoplasm. It catalyses the reaction tRNA(Ile) + L-isoleucine + ATP = L-isoleucyl-tRNA(Ile) + AMP + diphosphate. Catalyzes the attachment of isoleucine to tRNA(Ile). As IleRS can inadvertently accommodate and process structurally similar amino acids such as valine, to avoid such errors it has two additional distinct tRNA(Ile)-dependent editing activities. One activity is designated as 'pretransfer' editing and involves the hydrolysis of activated Val-AMP. The other activity is designated 'posttransfer' editing and involves deacylation of mischarged Val-tRNA(Ile). This is Isoleucine--tRNA ligase from Lactococcus lactis subsp. lactis (strain IL1403) (Streptococcus lactis).